Reading from the N-terminus, the 372-residue chain is L-selectin (372 aa).

An N-terminal signal peptide occupies residues M1–C28. A propeptide spanning residues D29 to C38 is cleaved from the precursor. Residues W39–N332 are Extracellular-facing. One can recognise a C-type lectin domain in the interval R55–C155. 10 cysteine pairs are disulfide-bonded: C57-C155, C128-C147, C128-C160, C160-C171, C165-C180, C182-C191, C197-C241, C227-C254, C259-C303, and C289-C316. 2 N-linked (GlcNAc...) asparagine glycosylation sites follow: N60 and N104. Residues E118, N120, E126, N143, and D144 each contribute to the Ca(2+) site. The EGF-like domain occupies Y156–Q192. Residue N177 is glycosylated (N-linked (GlcNAc...) asparagine). Sushi domains follow at residues I195–V256 and I257–K318. 4 N-linked (GlcNAc...) asparagine glycosylation sites follow: N226, N232, N246, and N271. Residues P333–A355 form a helical membrane-spanning segment. Over R356 to Y372 the chain is Cytoplasmic.

The protein belongs to the selectin/LECAM family. Interaction with SELPLG/PSGL1 and PODXL2 is required for promoting recruitment and rolling of leukocytes. This interaction is dependent on the sialyl Lewis X glycan modification of SELPLG and PODXL2, and tyrosine sulfation modifications of SELPLG. Sulfation on 'Tyr-51' of SELPLG is important for L-selectin binding. In terms of processing, N-glycosylated.

Its subcellular location is the cell membrane. Functionally, calcium-dependent lectin that mediates cell adhesion by binding to glycoproteins on neighboring cells. Mediates the adherence of lymphocytes to endothelial cells of high endothelial venules in peripheral lymph nodes. Promotes initial tethering and rolling of leukocytes in endothelia. The chain is L-selectin (SELL) from Papio hamadryas (Hamadryas baboon).